Here is a 31-residue protein sequence, read N- to C-terminus: Alcohol dehydrogenase 1 (31 aa).

Cys-7 is a Zn(2+) binding site.

It belongs to the zinc-containing alcohol dehydrogenase family. Class-P subfamily. As to quaternary structure, homodimer. Requires Zn(2+) as cofactor.

It localises to the cytoplasm. It carries out the reaction a primary alcohol + NAD(+) = an aldehyde + NADH + H(+). The enzyme catalyses a secondary alcohol + NAD(+) = a ketone + NADH + H(+). This Catharanthus roseus (Madagascar periwinkle) protein is Alcohol dehydrogenase 1.